Here is a 360-residue protein sequence, read N- to C-terminus: Peptide chain release factor 1 (360 aa).

An N5-methylglutamine modification is found at Gln-235. The segment covering 284–293 (HKRQQEEAST) has biased composition (basic and acidic residues). The segment at 284 to 305 (HKRQQEEASTRRNLLGSGDRSD) is disordered.

This sequence belongs to the prokaryotic/mitochondrial release factor family. Post-translationally, methylated by PrmC. Methylation increases the termination efficiency of RF1.

It is found in the cytoplasm. Peptide chain release factor 1 directs the termination of translation in response to the peptide chain termination codons UAG and UAA. In Pectobacterium atrosepticum (strain SCRI 1043 / ATCC BAA-672) (Erwinia carotovora subsp. atroseptica), this protein is Peptide chain release factor 1.